Here is a 339-residue protein sequence, read N- to C-terminus: Methylthioribose-1-phosphate isomerase (339 aa).

Residues 49–51 (RGA), arginine 86, and glutamine 187 contribute to the substrate site. The Proton donor role is filled by aspartate 228. 238-239 (NK) serves as a coordination point for substrate.

It belongs to the eIF-2B alpha/beta/delta subunits family. MtnA subfamily.

The catalysed reaction is 5-(methylsulfanyl)-alpha-D-ribose 1-phosphate = 5-(methylsulfanyl)-D-ribulose 1-phosphate. It functions in the pathway amino-acid biosynthesis; L-methionine biosynthesis via salvage pathway; L-methionine from S-methyl-5-thio-alpha-D-ribose 1-phosphate: step 1/6. Functionally, catalyzes the interconversion of methylthioribose-1-phosphate (MTR-1-P) into methylthioribulose-1-phosphate (MTRu-1-P). The protein is Methylthioribose-1-phosphate isomerase of Cronobacter sakazakii (strain ATCC BAA-894) (Enterobacter sakazakii).